The following is a 90-amino-acid chain: Carboxysome shell vertex protein CsoS4A (90 aa).

The BMV domain maps to 1–78; that stretch reads MKIYKVDKTL…SDLTIVGIID (78 aa).

It belongs to the CcmL/EutN family. CsoS4 subfamily. As to quaternary structure, homopentamer.

It localises to the carboxysome. Its function is as follows. Probably forms vertices in the carboxysome, a polyhedral inclusion where RuBisCO (ribulose bisphosphate carboxylase, cbbL-cbbS) is sequestered. Has been modeled to induce curvature upon insertion into an otherwise flat hexagonal layer of major carboxysome subunits. The sequence is that of Carboxysome shell vertex protein CsoS4A from Hydrogenovibrio crunogenus (strain DSM 25203 / XCL-2) (Thiomicrospira crunogena).